A 155-amino-acid chain; its full sequence is Large ribosomal subunit protein uL13 (155 aa).

Belongs to the universal ribosomal protein uL13 family. As to quaternary structure, part of the 50S ribosomal subunit.

In terms of biological role, this protein is one of the early assembly proteins of the 50S ribosomal subunit, although it is not seen to bind rRNA by itself. It is important during the early stages of 50S assembly. This Aeropyrum pernix (strain ATCC 700893 / DSM 11879 / JCM 9820 / NBRC 100138 / K1) protein is Large ribosomal subunit protein uL13.